Consider the following 314-residue polypeptide: DNA-directed RNA polymerase subunit alpha (314 aa).

Residues 1–228 (MIEIEKPRIE…EHLNIFVGLT (228 aa)) form an alpha N-terminal domain (alpha-NTD) region. Residues 246–314 (EKVLEMSIEE…DLGLGLRKED (69 aa)) are alpha C-terminal domain (alpha-CTD).

The protein belongs to the RNA polymerase alpha chain family. As to quaternary structure, homodimer. The RNAP catalytic core consists of 2 alpha, 1 beta, 1 beta' and 1 omega subunit. When a sigma factor is associated with the core the holoenzyme is formed, which can initiate transcription.

The enzyme catalyses RNA(n) + a ribonucleoside 5'-triphosphate = RNA(n+1) + diphosphate. DNA-dependent RNA polymerase catalyzes the transcription of DNA into RNA using the four ribonucleoside triphosphates as substrates. The sequence is that of DNA-directed RNA polymerase subunit alpha from Staphylococcus aureus (strain Mu3 / ATCC 700698).